The following is a 543-amino-acid chain: Chaperonin GroEL (543 aa).

Residues 30 to 33, Lys-51, 87 to 91, Gly-415, and Asp-496 contribute to the ATP site; these read TLGP and DGTTT.

Belongs to the chaperonin (HSP60) family. Forms a cylinder of 14 subunits composed of two heptameric rings stacked back-to-back. Interacts with the co-chaperonin GroES.

It is found in the cytoplasm. It catalyses the reaction ATP + H2O + a folded polypeptide = ADP + phosphate + an unfolded polypeptide.. Functionally, together with its co-chaperonin GroES, plays an essential role in assisting protein folding. The GroEL-GroES system forms a nano-cage that allows encapsulation of the non-native substrate proteins and provides a physical environment optimized to promote and accelerate protein folding. This chain is Chaperonin GroEL, found in Gluconobacter oxydans (strain 621H) (Gluconobacter suboxydans).